A 176-amino-acid chain; its full sequence is Nucleoside triphosphate/diphosphate phosphatase (176 aa).

Arginine 23 (proton donor) is an active-site residue. Residues asparagine 87, aspartate 103, aspartate 105, aspartate 107, aspartate 120, and glutamate 123 each contribute to the Mg(2+) site.

This sequence belongs to the Ntdp family. Mg(2+) serves as cofactor.

It catalyses the reaction a ribonucleoside 5'-triphosphate + H2O = a ribonucleoside 5'-diphosphate + phosphate + H(+). The catalysed reaction is a ribonucleoside 5'-diphosphate + H2O = a ribonucleoside 5'-phosphate + phosphate + H(+). Has nucleoside phosphatase activity towards nucleoside triphosphates and nucleoside diphosphates. The polypeptide is Nucleoside triphosphate/diphosphate phosphatase (Bacillus cereus (strain AH820)).